The chain runs to 511 residues: MIHDMIKTIEHFAETQADFPVYDILGEVHTYGQLKVDSDSLAAHIDSLGLVEKSPVLVFGGQEYEMLATFVALTKSGHAYIPVDQHSALDRIQAIMTVAQPSLIISIGEFPLEVDNVPILDVSQVSAIFEEKTPYEVTHSVKGDDNYYIIFTSGTTGLPKGVQISHDNLLSFTNWMISDDEFSVPERPQMLAQPPYSFDLSVMYWAPTLAMGGTLFALPKTVVNDFKKLFATINELPIQVWTSTPSFADMALLSNDFNSETLPQLTHFYFDGEELTVKTAQKLRQRFPKARIVNAYGPTEATVALSAVAITDEMLETCKRLPIGYTKDDSPTYVIDEEGHKLPNGEQGEIIIAGPAVSKGYLNNPEKTAEAFFQFEGLPAYHTGDLGSMTDEGLLLYGGRMDFQIKFNGYRIELEDVSQNLNKSQYVKSAVAVPRYNKDHKVQNLLAYIVLKEGVRDDFERDLDLTKAIKEDLKDIMMDYMMPSKFIYREDLPLTPNGKIDIKGLMSEVNK.

152 to 153 contacts ATP; it reads TS. Position 199 (aspartate 199) interacts with D-alanine. Position 294-299 (294-299) interacts with ATP; sequence NAYGPT. Valine 303 is a binding site for D-alanine. ATP is bound by residues aspartate 385, 397–400, and lysine 499; that span reads YGGR. Lysine 499 serves as a coordination point for D-alanine.

The protein belongs to the ATP-dependent AMP-binding enzyme family. DltA subfamily.

Its subcellular location is the cytoplasm. It carries out the reaction holo-[D-alanyl-carrier protein] + D-alanine + ATP = D-alanyl-[D-alanyl-carrier protein] + AMP + diphosphate. It functions in the pathway cell wall biogenesis; lipoteichoic acid biosynthesis. In terms of biological role, catalyzes the first step in the D-alanylation of lipoteichoic acid (LTA), the activation of D-alanine and its transfer onto the D-alanyl carrier protein (Dcp) DltC. In an ATP-dependent two-step reaction, forms a high energy D-alanyl-AMP intermediate, followed by transfer of the D-alanyl residue as a thiol ester to the phosphopantheinyl prosthetic group of the Dcp. D-alanylation of LTA plays an important role in modulating the properties of the cell wall in Gram-positive bacteria, influencing the net charge of the cell wall. The protein is D-alanine--D-alanyl carrier protein ligase of Streptococcus agalactiae serotype V (strain ATCC BAA-611 / 2603 V/R).